Consider the following 441-residue polypeptide: Glutamate--tRNA ligase 1 (441 aa).

Positions 7–17 (PSPTGYMHIGN) match the 'HIGH' region motif. The 'KMSKS' region signature appears at 236-240 (KMSKR). K239 contributes to the ATP binding site.

The protein belongs to the class-I aminoacyl-tRNA synthetase family. Glutamate--tRNA ligase type 1 subfamily. In terms of assembly, monomer.

It localises to the cytoplasm. The catalysed reaction is tRNA(Glu) + L-glutamate + ATP = L-glutamyl-tRNA(Glu) + AMP + diphosphate. Functionally, catalyzes the attachment of glutamate to tRNA(Glu) in a two-step reaction: glutamate is first activated by ATP to form Glu-AMP and then transferred to the acceptor end of tRNA(Glu). This is Glutamate--tRNA ligase 1 from Anaplasma marginale (strain St. Maries).